The following is a 94-amino-acid chain: Large ribosomal subunit protein eL37 (94 aa).

Zn(2+)-binding residues include Cys19, Cys22, Cys34, and Cys37. The C4-type zinc finger occupies 19 to 37; the sequence is CRRCGKATYHKQKLRCAAC.

The protein belongs to the eukaryotic ribosomal protein eL37 family. The cofactor is Zn(2+).

It localises to the cytoplasm. Its function is as follows. Binds to the 23S rRNA. This Tetrahymena thermophila (strain SB210) protein is Large ribosomal subunit protein eL37 (RPL37).